The sequence spans 300 residues: Junctional adhesion molecule A (300 aa).

Residues 1-26 (MGTEGKAGSKLLFLFTSMILGSLVQG) form the signal peptide. Residues 27–238 (KGSVYSPQTA…MEAVELNVGG (212 aa)) lie on the Extracellular side of the membrane. 2 consecutive Ig-like V-type domains span residues 28-122 (GSVY…GEVS) and 134-228 (PTVS…EAVR). Cystine bridges form between C49/C108 and C152/C212. N185 carries N-linked (GlcNAc...) asparagine glycosylation. A helical membrane pass occupies residues 239–259 (IVAAVLVTLILLGLLIFGIWF). The Cytoplasmic portion of the chain corresponds to 260–300 (AYSRGYFERTKKGTAPGKKVIYSQPSARSEGEFKQTSSFLV). 3 positions are modified to phosphoserine: S282, S285, and S288.

The protein belongs to the immunoglobulin superfamily. In terms of assembly, interacts with the ninth PDZ domain of MPDZ. Interacts with the first PDZ domain of PARD3. The association between PARD3 and PARD6B probably disrupts this interaction. Interacts with ITGAL (via I-domain). Interacts with CD151. Post-translationally, N-glycosylated.

It localises to the cell junction. The protein resides in the tight junction. The protein localises to the cell membrane. Functionally, seems to play a role in epithelial tight junction formation. Appears early in primordial forms of cell junctions and recruits PARD3. The association of the PARD6-PARD3 complex may prevent the interaction of PARD3 with JAM1, thereby preventing tight junction assembly. Plays a role in regulating monocyte transmigration involved in integrity of epithelial barrier. Ligand for integrin alpha-L/beta-2 involved in memory T-cell and neutrophil transmigration. This is Junctional adhesion molecule A (F11r) from Rattus norvegicus (Rat).